Consider the following 340-residue polypeptide: MAEEKIPTVQDEKKLQALRMATEKIEKTFGKGAIMNMGANTVEDVSVIPSGSIGLDLALGVGGYPRGRIIEIYGPESSGKTTLAIHAIAEAQKAGGLAAIIDAEHAFDRTYAEKLGVNVDNLWIAQPDNGEQALEIAEQLIRSSAVDIIVIDSVAALTPKAEIEGEMGDNKVGLHARLMSQALRKMTGAISKSNTTCIFINQLREKIGVLFGNPETTTGGNALKFYASIRIDIRKSTPIKDGEEIMGHLTKVKVLKNKVAPPFRKAEFDIVFGEGISRSGEIIDLGVELDIIKKSGSWFSYGDTKLGQGREAAKEMIRDNEELAEELTEKIREAIRNKHS.

Gly74 to Thr81 serves as a coordination point for ATP.

This sequence belongs to the RecA family.

It is found in the cytoplasm. In terms of biological role, can catalyze the hydrolysis of ATP in the presence of single-stranded DNA, the ATP-dependent uptake of single-stranded DNA by duplex DNA, and the ATP-dependent hybridization of homologous single-stranded DNAs. It interacts with LexA causing its activation and leading to its autocatalytic cleavage. This is Protein RecA from Porphyromonas gingivalis (strain ATCC 33277 / DSM 20709 / CIP 103683 / JCM 12257 / NCTC 11834 / 2561).